We begin with the raw amino-acid sequence, 375 residues long: uncharacterized protein (375 aa).

A run of 7 helical transmembrane segments spans residues leucine 21–phenylalanine 41, isoleucine 66–serine 86, leucine 160–valine 180, leucine 203–isoleucine 223, phenylalanine 234–phenylalanine 254, valine 289–isoleucine 309, and phenylalanine 338–phenylalanine 358.

The protein localises to the cell membrane. This is an uncharacterized protein from Mycoplasma genitalium (strain ATCC 33530 / DSM 19775 / NCTC 10195 / G37) (Mycoplasmoides genitalium).